The chain runs to 60 residues: Phycobilisome degradation protein NblA homolog 2 (60 aa).

The protein to Synechococcus PCC 7942 NblA and some, to chloroplast ycf18.

This chain is Phycobilisome degradation protein NblA homolog 2, found in Synechocystis sp. (strain ATCC 27184 / PCC 6803 / Kazusa).